Here is a 183-residue protein sequence, read N- to C-terminus: Tetrahydromethanopterin S-methyltransferase subunit A 2 (183 aa).

Over 1 to 101 (MFLMVEKKPV…TMKALHSNGV (101 aa)) the chain is Cytoplasmic. H87 provides a ligand contact to 5-hydroxybenzimidazolylcob(I)amide. A helical transmembrane segment spans residues 102–118 (DLETGRIIGATGAIPYI). At 119-183 (ENMPEEAIER…IGKGDSEENT (65 aa)) the chain is on the extracellular side.

It belongs to the MtrA family. The complex is composed of 8 subunits; MtrA, MtrB, MtrC, MtrD, MtrE, MtrF, MtrG and MtrH. 5-hydroxybenzimidazolylcob(I)amide is required as a cofactor.

The protein localises to the cell membrane. It catalyses the reaction 5-methyl-5,6,7,8-tetrahydromethanopterin + coenzyme M + 2 Na(+)(in) = 5,6,7,8-tetrahydromethanopterin + methyl-coenzyme M + 2 Na(+)(out). It participates in one-carbon metabolism; methanogenesis from CO(2); methyl-coenzyme M from 5,10-methylene-5,6,7,8-tetrahydromethanopterin: step 2/2. In terms of biological role, part of a complex that catalyzes the formation of methyl-coenzyme M and tetrahydromethanopterin from coenzyme M and methyl-tetrahydromethanopterin. This is an energy-conserving, sodium-ion translocating step. The protein is Tetrahydromethanopterin S-methyltransferase subunit A 2 of Methanothermobacter thermautotrophicus (strain ATCC 29096 / DSM 1053 / JCM 10044 / NBRC 100330 / Delta H) (Methanobacterium thermoautotrophicum).